Consider the following 130-residue polypeptide: Small ribosomal subunit protein eS8 (130 aa).

It belongs to the eukaryotic ribosomal protein eS8 family. As to quaternary structure, part of the 30S ribosomal subunit.

In Thermococcus onnurineus (strain NA1), this protein is Small ribosomal subunit protein eS8.